Reading from the N-terminus, the 273-residue chain is Ribosomal protein L11 methyltransferase (273 aa).

Thr112, Gly133, Asp155, and Asn203 together coordinate S-adenosyl-L-methionine.

Belongs to the methyltransferase superfamily. PrmA family.

The protein localises to the cytoplasm. It catalyses the reaction L-lysyl-[protein] + 3 S-adenosyl-L-methionine = N(6),N(6),N(6)-trimethyl-L-lysyl-[protein] + 3 S-adenosyl-L-homocysteine + 3 H(+). Functionally, methylates ribosomal protein L11. The polypeptide is Ribosomal protein L11 methyltransferase (Deinococcus radiodurans (strain ATCC 13939 / DSM 20539 / JCM 16871 / CCUG 27074 / LMG 4051 / NBRC 15346 / NCIMB 9279 / VKM B-1422 / R1)).